The primary structure comprises 485 residues: Trigger factor (485 aa).

The 86-residue stretch at glycine 171–alanine 256 folds into the PPIase FKBP-type domain. A disordered region spans residues phenylalanine 443–alanine 485. Residues glutamate 452–alanine 462 show a composition bias toward low complexity.

It belongs to the FKBP-type PPIase family. Tig subfamily.

It is found in the cytoplasm. It catalyses the reaction [protein]-peptidylproline (omega=180) = [protein]-peptidylproline (omega=0). In terms of biological role, involved in protein export. Acts as a chaperone by maintaining the newly synthesized protein in an open conformation. Functions as a peptidyl-prolyl cis-trans isomerase. This chain is Trigger factor, found in Methylobacterium sp. (strain 4-46).